A 413-amino-acid chain; its full sequence is Tyrosine--tRNA ligase (413 aa).

L-tyrosine is bound at residue Y34. The 'HIGH' region signature appears at 39-48 (CTAQSLHVGN). The L-tyrosine site is built by Y171 and Q175. The 'KMSKS' region signature appears at 231 to 235 (KMGKT). K234 provides a ligand contact to ATP. The 66-residue stretch at 346–411 (IPITELLVTI…GKKCHILVKI (66 aa)) folds into the S4 RNA-binding domain.

The protein belongs to the class-I aminoacyl-tRNA synthetase family. TyrS type 1 subfamily. In terms of assembly, homodimer.

It is found in the cytoplasm. The catalysed reaction is tRNA(Tyr) + L-tyrosine + ATP = L-tyrosyl-tRNA(Tyr) + AMP + diphosphate + H(+). Its function is as follows. Catalyzes the attachment of tyrosine to tRNA(Tyr) in a two-step reaction: tyrosine is first activated by ATP to form Tyr-AMP and then transferred to the acceptor end of tRNA(Tyr). This chain is Tyrosine--tRNA ligase, found in Orientia tsutsugamushi (strain Boryong) (Rickettsia tsutsugamushi).